The primary structure comprises 443 residues: Chromosome partition protein MukF (443 aa).

Positions 209–237 (LDETSGNLRELQDTLNAAGDKLQAQLLRI) are leucine-zipper.

Belongs to the MukF family. Interacts, and probably forms a ternary complex, with MukE and MukB via its C-terminal region. The complex formation is stimulated by calcium or magnesium. It is required for an interaction between MukE and MukB.

The protein localises to the cytoplasm. It localises to the nucleoid. Involved in chromosome condensation, segregation and cell cycle progression. May participate in facilitating chromosome segregation by condensation DNA from both sides of a centrally located replisome during cell division. Not required for mini-F plasmid partitioning. Probably acts via its interaction with MukB and MukE. Overexpression results in anucleate cells. It has a calcium binding activity. This chain is Chromosome partition protein MukF, found in Actinobacillus pleuropneumoniae serotype 5b (strain L20).